The chain runs to 546 residues: Protein RDR1 (546 aa).

The segment at residues 20-46 is a DNA-binding region (zn(2)-C6 fungal-type); that stretch reads CVPCRERKRKCNGKSPCEMCVAYGYVC.

The protein resides in the nucleus. Transcriptional repressor of multidrug resistance genes, such as PDR5. Required for growth on non-fermentable carbon sources like lactate or glycerol. The polypeptide is Protein RDR1 (RDR1) (Saccharomyces cerevisiae (strain ATCC 204508 / S288c) (Baker's yeast)).